Here is a 533-residue protein sequence, read N- to C-terminus: Laccase-2 (533 aa).

A signal peptide spans 1–23 (MFPGARILATLTLALHLLHGAHA). Plastocyanin-like domains are found at residues 25 to 171 (IGPA…LSLY), 173 to 336 (IDNA…LETN), and 382 to 501 (TAPV…FAED). Cu cation is bound by residues H98, H100, H143, and H145. Intrachain disulfides connect C119-C516 and C151-C238. Positions 427, 430, and 432 each coordinate Cu cation. A glycan (N-linked (GlcNAc...) (high mannose) asparagine) is linked at N467. Cu cation contacts are provided by H483, C484, H485, and H489.

Belongs to the multicopper oxidase family. Cu cation serves as cofactor. N-glycosylated at Asn-467; contains a high-mannose glycan with a varying number of mannose residues.

It is found in the secreted. The enzyme catalyses 4 hydroquinone + O2 = 4 benzosemiquinone + 2 H2O. Functionally, lignin degradation and detoxification of lignin-derived products. This chain is Laccase-2 (POX2), found in Pleurotus ostreatus (Oyster mushroom).